Consider the following 110-residue polypeptide: UPF0251 protein PH0803 (110 aa).

The protein belongs to the UPF0251 family.

In Pyrococcus horikoshii (strain ATCC 700860 / DSM 12428 / JCM 9974 / NBRC 100139 / OT-3), this protein is UPF0251 protein PH0803.